Consider the following 293-residue polypeptide: 4-hydroxy-tetrahydrodipicolinate synthase (293 aa).

Thr-47 contributes to the pyruvate binding site. Tyr-136 (proton donor/acceptor) is an active-site residue. Lys-164 serves as the catalytic Schiff-base intermediate with substrate. Ile-206 contributes to the pyruvate binding site.

It belongs to the DapA family. Homotetramer; dimer of dimers.

Its subcellular location is the cytoplasm. It carries out the reaction L-aspartate 4-semialdehyde + pyruvate = (2S,4S)-4-hydroxy-2,3,4,5-tetrahydrodipicolinate + H2O + H(+). The protein operates within amino-acid biosynthesis; L-lysine biosynthesis via DAP pathway; (S)-tetrahydrodipicolinate from L-aspartate: step 3/4. Catalyzes the condensation of (S)-aspartate-beta-semialdehyde [(S)-ASA] and pyruvate to 4-hydroxy-tetrahydrodipicolinate (HTPA). The protein is 4-hydroxy-tetrahydrodipicolinate synthase of Listeria welshimeri serovar 6b (strain ATCC 35897 / DSM 20650 / CCUG 15529 / CIP 8149 / NCTC 11857 / SLCC 5334 / V8).